The sequence spans 382 residues: Layilin (382 aa).

Residues 1 to 21 form the signal peptide; it reads MRPGTALQAVLLAVLLVGLRA. The Extracellular segment spans residues 22-235; that stretch reads ATGRLLSASD…SREAALNLAY (214 aa). Residues 45-185 form the C-type lectin domain; sequence TQRPCYKVIY…CNMKNNFICK (141 aa). Cystine bridges form between cysteine 71/cysteine 184 and cysteine 150/cysteine 176. Asparagine 117 carries an N-linked (GlcNAc...) asparagine glycan. Residues 236 to 256 traverse the membrane as a helical segment; sequence ILIPSIPLLLLLVVTTVVCWV. The Cytoplasmic portion of the chain corresponds to 257 to 382; the sequence is WICRKRKREQ…GWVENEIYGY (126 aa). The segment at 266–285 is disordered; that stretch reads QPDPSTKKQHTIWPSPHQGN. Serine 286 and serine 299 each carry phosphoserine. The interaction with NF2 stretch occupies residues 330–374; the sequence is DYDNMAVNPSESGFVTLVSVESGFVTNDIYEFSPDQMGRSKESGW. The tract at residues 337 to 382 is interaction with TLN1; sequence NPSESGFVTLVSVESGFVTNDIYEFSPDQMGRSKESGWVENEIYGY. 5 repeat units span residues 340-344, 350-354, 356-359, 371-375, and 377-380. Residues 340–375 are 3 X 5 AA repeats of E-S-G-X-V; the sequence is ESGFVTLVSVESGFVTNDIYEFSPDQMGRSKESGWV. The segment at 356-380 is 2 X 4 AA repeats of N-X-I-Y; that stretch reads NDIYEFSPDQMGRSKESGWVENEIY.

As to quaternary structure, interacts with NF2, RDX and TLN1.

It localises to the membrane. Its function is as follows. Receptor for hyaluronate. The polypeptide is Layilin (LAYN) (Homo sapiens (Human)).